Reading from the N-terminus, the 257-residue chain is Zinc import ATP-binding protein ZnuC (257 aa).

An ABC transporter domain is found at 6-221; it reads IRLDQVGVTF…PAFVELFGKT (216 aa). 38 to 45 provides a ligand contact to ATP; sequence GPNGAGKT.

It belongs to the ABC transporter superfamily. Zinc importer (TC 3.A.1.15.5) family. In terms of assembly, the complex is composed of two ATP-binding proteins (ZnuC), two transmembrane proteins (ZnuB) and a solute-binding protein (ZnuA).

The protein localises to the cell inner membrane. It carries out the reaction Zn(2+)(out) + ATP(in) + H2O(in) = Zn(2+)(in) + ADP(in) + phosphate(in) + H(+)(in). Its function is as follows. Part of the ABC transporter complex ZnuABC involved in zinc import. Responsible for energy coupling to the transport system. The polypeptide is Zinc import ATP-binding protein ZnuC (Pseudomonas putida (strain ATCC 47054 / DSM 6125 / CFBP 8728 / NCIMB 11950 / KT2440)).